The chain runs to 364 residues: Anthranilate phosphoribosyltransferase (364 aa).

5-phospho-alpha-D-ribose 1-diphosphate is bound by residues Gly101, Gly104–Asp105, Thr109, Asn111–Thr114, Lys129–Ser137, and Gly141. Gly101 is a binding site for anthranilate. Ser113 is a Mg(2+) binding site. Residue Asn132 participates in anthranilate binding. Arg187 serves as a coordination point for anthranilate. Asp245 and Glu246 together coordinate Mg(2+).

Belongs to the anthranilate phosphoribosyltransferase family. Homodimer. Mg(2+) serves as cofactor.

The enzyme catalyses N-(5-phospho-beta-D-ribosyl)anthranilate + diphosphate = 5-phospho-alpha-D-ribose 1-diphosphate + anthranilate. It participates in amino-acid biosynthesis; L-tryptophan biosynthesis; L-tryptophan from chorismate: step 2/5. In terms of biological role, catalyzes the transfer of the phosphoribosyl group of 5-phosphorylribose-1-pyrophosphate (PRPP) to anthranilate to yield N-(5'-phosphoribosyl)-anthranilate (PRA). The protein is Anthranilate phosphoribosyltransferase of Mycolicibacterium gilvum (strain PYR-GCK) (Mycobacterium gilvum (strain PYR-GCK)).